The primary structure comprises 769 residues: Post-GPI attachment to proteins factor 6 (769 aa).

The signal sequence occupies residues methionine 1–alanine 33. Residues serine 34 to arginine 543 are Extracellular-facing. Residues asparagine 138 and asparagine 411 are each glycosylated (N-linked (GlcNAc...) asparagine). An EGF-like domain is found at proline 495–threonine 531. Disulfide bonds link cysteine 496/cysteine 506, cysteine 500/cysteine 519, and cysteine 521/cysteine 530. The helical transmembrane segment at alanine 544–leucine 564 threads the bilayer. The Cytoplasmic portion of the chain corresponds to histidine 565–serine 567. Residues phenylalanine 568–cysteine 588 form a helical membrane-spanning segment. The Extracellular segment spans residues aspartate 589 to threonine 603. A helical transmembrane segment spans residues leucine 604–alanine 624. The Cytoplasmic portion of the chain corresponds to arginine 625–lysine 627. Residues threonine 628–methionine 648 traverse the membrane as a helical segment. Over aspartate 649 to arginine 651 the chain is Extracellular. The helical transmembrane segment at glycine 652 to isoleucine 672 threads the bilayer. Topologically, residues tyrosine 673–arginine 688 are cytoplasmic. A helical membrane pass occupies residues tryptophan 689–serine 709. Residues methionine 710–asparagine 715 lie on the Extracellular side of the membrane. A helical membrane pass occupies residues tyrosine 716 to proline 736. At proline 737–threonine 769 the chain is on the cytoplasmic side.

It belongs to the TMEM8 family. Post-translationally, glycosylated.

It is found in the cell membrane. It localises to the lysosome membrane. It catalyses the reaction a 1,2-diacyl-sn-glycero-3-phosphocholine + H2O = a 1-acyl-sn-glycero-3-phosphocholine + a fatty acid + H(+). Its function is as follows. Involved in the lipid remodeling steps of GPI-anchor maturation. Lipid remodeling steps consist in the generation of 2 saturated fatty chains at the sn-2 position of GPI-anchor proteins (GPI-AP). Has phospholipase A2 activity that removes an acyl-chain at the sn-2 position of GPI-anchors during the remodeling of GPI. Required for the shedding of the GPI-AP CRIPTO, but not CFC1, at the cell surface. Shedding of CRIPTO modulates Nodal signaling by allowing soluble CRIPTO to act as a Nodal coreceptor on other cells. Also indirectly involved in the translocation of RAC1 from the cytosol to the plasma membrane by maintaining the steady state amount of CAV1-enriched plasma membrane subdomains, stabilizing RAC1 at the plasma membrane. This is Post-GPI attachment to proteins factor 6 from Mus musculus (Mouse).